We begin with the raw amino-acid sequence, 319 residues long: MELKNHKKIIILGSGPAGYTAAIYSSRANLNPLLITGINKGGQLMNTNEIENWPGDFKKITGPELMNRMHEHSLKFKTEIVYDNIISVEFKKKPFFLLGEYNKYTCDAVIIATGANPRYLGLSSENKFKGKGISTCAVCDGFFYKNKEIAVVGGGNTAIEETLYLSNFVKKIYLIHRRNNFKAEKILIDRLLKIVKTKKVILHLNSTIEDILGNNKGVTHLLIKNKNLKEKKKLKIAVSGLFVAIGYIPNTDIFTDQLKMKDGYIKIKKGTHGNYTQTNIPGVFAAGDVIDHVYRQAITSSASGCMAALDSERYLNSLS.

Residue 36–43 participates in FAD binding; sequence TGINKGGQ. Cysteine 136 and cysteine 139 are oxidised to a cystine. An FAD-binding site is contributed by 288–297; sequence DVIDHVYRQA.

It belongs to the class-II pyridine nucleotide-disulfide oxidoreductase family. As to quaternary structure, homodimer. FAD is required as a cofactor.

The protein localises to the cytoplasm. It catalyses the reaction [thioredoxin]-dithiol + NADP(+) = [thioredoxin]-disulfide + NADPH + H(+). This Buchnera aphidicola subsp. Schizaphis graminum (strain Sg) protein is Thioredoxin reductase (trxB).